We begin with the raw amino-acid sequence, 238 residues long: Probable transcriptional regulatory protein CPn_0573/CP_0176/CPj0573/CpB0595 (238 aa).

Residues 1-20 (MAGHSKWANTKHRKERADHK) form a disordered region. Residues 9–20 (NTKHRKERADHK) show a composition bias toward basic residues.

Belongs to the TACO1 family.

The protein localises to the cytoplasm. The sequence is that of Probable transcriptional regulatory protein CPn_0573/CP_0176/CPj0573/CpB0595 from Chlamydia pneumoniae (Chlamydophila pneumoniae).